Reading from the N-terminus, the 291-residue chain is tRNA dimethylallyltransferase (291 aa).

9–16 provides a ligand contact to ATP; sequence GTTASGKT. Residue 11-16 coordinates substrate; it reads TASGKT. The segment at 34-37 is interaction with substrate tRNA; the sequence is DSLC.

It belongs to the IPP transferase family. Monomer. The cofactor is Mg(2+).

It catalyses the reaction adenosine(37) in tRNA + dimethylallyl diphosphate = N(6)-dimethylallyladenosine(37) in tRNA + diphosphate. Functionally, catalyzes the transfer of a dimethylallyl group onto the adenine at position 37 in tRNAs that read codons beginning with uridine, leading to the formation of N6-(dimethylallyl)adenosine (i(6)A). This is tRNA dimethylallyltransferase from Campylobacter lari (strain RM2100 / D67 / ATCC BAA-1060).